The following is a 479-amino-acid chain: Ribosomal RNA small subunit methyltransferase F (479 aa).

S-adenosyl-L-methionine is bound by residues 125–131, Glu149, Asp176, and Asp194; that span reads AAAPGSK. Cys247 serves as the catalytic Nucleophile.

It belongs to the class I-like SAM-binding methyltransferase superfamily. RsmB/NOP family.

It localises to the cytoplasm. It carries out the reaction cytidine(1407) in 16S rRNA + S-adenosyl-L-methionine = 5-methylcytidine(1407) in 16S rRNA + S-adenosyl-L-homocysteine + H(+). Its function is as follows. Specifically methylates the cytosine at position 1407 (m5C1407) of 16S rRNA. This Shigella boydii serotype 18 (strain CDC 3083-94 / BS512) protein is Ribosomal RNA small subunit methyltransferase F.